We begin with the raw amino-acid sequence, 502 residues long: MRNTSRVAILVVIVGALLALTNGFWEGKLLGLFSVLMSCSVIFIALVISLENRKPAQTIAWLAVLGSFPIVGFLFYLLFGRNYWQQRRYKKKADFDEAVLLKFQEPSPIAVERLPMAPHQRPLLRLAYRIGQHPVSLASQTAVLTNGEETFSSIFAELEKAEHHIHLEYYIVRHDEIGQQLKRVLMEKARQGVRVRFLYDAVGSWKLSNAYIEELRAAGVEMIPFSPVRLPFLSNQINFRNHRKIIVIDGGVGFVGGLNIGDEYLGKNKYFGFWRDTHLLIRGEAVRTLQLIFLQDWYYMTGERLLTPDYLSPPLIVEEGQGGVQLIAGGPDQKWEVIKQLYFAMITSAKRSIWVASPYFVPDEDILTALKVAALSGIDVRLLAPKRPDKKIVFYASRSYFPELLEAGVKIYEYEKGFLHSKVIVVDGELASIGTANMDMRSFHLNFEVNAFLYYTDSIHKLVRDFLEDFRHASMIDYEQFQQRPFRVRIAESVSRLLSPLL.

3 consecutive transmembrane segments (helical) span residues 7 to 27, 29 to 49, and 59 to 79; these read VAIL…FWEG, LLGL…LVIS, and IAWL…YLLF. PLD phosphodiesterase domains follow at residues 237–264 and 415–442; these read INFR…GDEY and EKGF…DMRS. Active-site residues include H242, K244, D249, H420, K422, and D427.

Belongs to the phospholipase D family. Cardiolipin synthase subfamily.

It localises to the cell membrane. The catalysed reaction is 2 a 1,2-diacyl-sn-glycero-3-phospho-(1'-sn-glycerol) = a cardiolipin + glycerol. In terms of biological role, catalyzes the reversible phosphatidyl group transfer from one phosphatidylglycerol molecule to another to form cardiolipin (CL) (diphosphatidylglycerol) and glycerol. This is Cardiolipin synthase (cls) from Geobacillus kaustophilus (strain HTA426).